The sequence spans 650 residues: Probable potassium transport system protein Kup 1 (650 aa).

Transmembrane regions (helical) follow at residues 12–32, 54–74, 97–117, 139–159, 170–190, 216–236, 249–269, 295–315, 344–364, 375–395, 400–420, and 428–448; these read GLLI…LYVM, ISLV…IIAL, WLVL…TLTP, VSSQ…LFSI, AFGP…LINM, AGIF…ALYS, SWPF…VWIL, LAAI…LITG, IYIP…VLYF, GLSI…WLAM, PVWN…FMIS, and GGYV…VWYY.

This sequence belongs to the HAK/KUP transporter (TC 2.A.72) family.

Its subcellular location is the cell membrane. It catalyses the reaction K(+)(in) + H(+)(in) = K(+)(out) + H(+)(out). Transport of potassium into the cell. Likely operates as a K(+):H(+) symporter. The chain is Probable potassium transport system protein Kup 1 from Lactobacillus acidophilus (strain ATCC 700396 / NCK56 / N2 / NCFM).